We begin with the raw amino-acid sequence, 242 residues long: ATP synthase subunit a (242 aa).

The next 6 membrane-spanning stretches (helical) occupy residues 29–49, 84–104, 114–134, 140–160, 181–201, and 203–223; these read SSIY…LAFY, FIPL…LGMT, IIVT…VGFI, FLTL…MIVI, MAGH…MIYL, and FLPI…AILQ.

Belongs to the ATPase A chain family. In terms of assembly, F-type ATPases have 2 components, CF(1) - the catalytic core - and CF(0) - the membrane proton channel. CF(1) has five subunits: alpha(3), beta(3), gamma(1), delta(1), epsilon(1). CF(0) has three main subunits: a(1), b(2) and c(9-12). The alpha and beta chains form an alternating ring which encloses part of the gamma chain. CF(1) is attached to CF(0) by a central stalk formed by the gamma and epsilon chains, while a peripheral stalk is formed by the delta and b chains.

Its subcellular location is the cell inner membrane. In terms of biological role, key component of the proton channel; it plays a direct role in the translocation of protons across the membrane. This is ATP synthase subunit a from Rickettsia typhi (strain ATCC VR-144 / Wilmington).